Here is a 193-residue protein sequence, read N- to C-terminus: Non-specific lipid transfer protein GPI-anchored 1 (193 aa).

Residues 1-22 form the signal peptide; the sequence is MKGLHLHLVLVTMTIVASIAAA. 4 disulfides stabilise this stretch: Cys35-Cys76, Cys45-Cys60, Cys61-Cys106, and Cys74-Cys116. N-linked (GlcNAc...) asparagine glycosylation is found at Asn110 and Asn135. A disordered region spans residues 138–161; that stretch reads TTPVAPAGKSPATPATSTDKGGSA. Asp165 is lipidated: GPI-anchor amidated aspartate. Positions 166–193 are cleaved as a propeptide — removed in mature form; that stretch reads GHAVVALAVALMAVSFVLTLPRHVTLGM.

The protein belongs to the plant LTP family. O-glycosylated on hydroxyprolines; noncontiguous hydroxylproline residues are glycosylated with arabinogalactan. Up-regulated in the epidermis of stems and leaves. Expressed in the epidermis, stem cortex, vascular bundles and mesophyll cells in root tips, cotyledons, seedlings, leaves, caulines, flowers, siliques, pollen, and early-developing seeds.

The protein resides in the cell membrane. The protein localises to the secreted. It is found in the cell wall. It localises to the endoplasmic reticulum. Its subcellular location is the golgi apparatus. Lipid transfer protein that, together with LTPG2, binds to lipids and functions as a component of the cuticular lipid export machinery that performs extensive export of intracellular lipids (e.g. C29 alkane) from epidermal cells to the surface to build the cuticular wax layer and silique walls. Involved in the establishment of resistance to the necrotrophic fungal pathogen Alternaria brassicicola. Contributes to pre-invasive defense against some non-host powdery mildew pathogens by preventing the penetration of the epidermal cell wall by the fungal agents (e.g. Blumeria graminis f. sp. hordei (Bgh)). Maybe involved in seed and ovule maturation and development, probably by regulating the fatty acids homeostasis during suberin and sporopollenin biosynthesis or deposition. The sequence is that of Non-specific lipid transfer protein GPI-anchored 1 from Arabidopsis thaliana (Mouse-ear cress).